The chain runs to 1141 residues: Probable ubiquitin carboxyl-terminal hydrolase 2 (1141 aa).

Thr-112 is subject to Phosphothreonine. Position 113 is a phosphoserine (Ser-113). At Thr-115 the chain carries Phosphothreonine. Positions 614 to 1124 constitute a USP domain; it reads IGLENTGNLC…NPYMLTYIRK (511 aa). Cys-623 (nucleophile) is an active-site residue. Thr-721 carries the post-translational modification Phosphothreonine. Ser-722 carries the phosphoserine modification. Positions 748-770 are disordered; it reads EEQAQGLEQEQGQDEAKSPAEQS. His-1076 acts as the Proton acceptor in catalysis.

Belongs to the peptidase C19 family.

The catalysed reaction is Thiol-dependent hydrolysis of ester, thioester, amide, peptide and isopeptide bonds formed by the C-terminal Gly of ubiquitin (a 76-residue protein attached to proteins as an intracellular targeting signal).. This is Probable ubiquitin carboxyl-terminal hydrolase 2 (ubp2) from Schizosaccharomyces pombe (strain 972 / ATCC 24843) (Fission yeast).